Consider the following 516-residue polypeptide: Polyprenol-phosphate-mannose--protein mannosyltransferase (516 aa).

A compositionally biased stretch (polar residues) spans 1 to 11 (MTALDTDTPTA). A disordered region spans residues 1–23 (MTALDTDTPTAGRSAPLISPGPV). Helical transmembrane passes span 113-133 (YNGL…VMLV), 143-163 (STLV…SFVS), 166-186 (TALL…CLMV), 234-254 (WSGL…DAIA), 275-295 (AAYV…APWF), 384-404 (VMLV…GWAL), 413-433 (WRYG…FADI), 437-457 (MYFF…ALIL), and 473-493 (LGLL…AWMY).

It belongs to the glycosyltransferase 39 family.

The protein localises to the cell membrane. It participates in protein modification; protein glycosylation. Protein O-mannosyltransferase that catalyzes the transfer of a single mannose residue from a polyprenol phospho-mannosyl lipidic donor to the hydroxyl group of selected serine and threonine residues in acceptor proteins. Involved in DNA conjugation, in at least the recipient strain. The chain is Polyprenol-phosphate-mannose--protein mannosyltransferase (pmt) from Mycolicibacterium smegmatis (strain MKD8) (Mycobacterium smegmatis).